The following is a 360-amino-acid chain: Protein phosphatase 1L (360 aa).

Residues 1-25 (MIEDTMTLLSLLGRIMRYFLLRPET) lie on the Extracellular side of the membrane. Residues 26–42 (LFLLCISLALWSYFFHT) form a helical membrane-spanning segment. The Cytoplasmic segment spans residues 43-360 (DEVKTIVKSS…FRNSSKTEEH (318 aa)). A PPM-type phosphatase domain is found at 92 to 351 (NVAVYSIQGR…DNITVMVVKF (260 aa)). 4 residues coordinate Mn(2+): Asp128, Gly129, Asp302, and Asp342.

It belongs to the PP2C family. Interacts with MAP3K7/TAK1 and MAP3K5. Mg(2+) serves as cofactor. The cofactor is Mn(2+). As to expression, expressed in brain, heart, testis, liver, lung and skeletal muscle.

The protein resides in the membrane. It catalyses the reaction O-phospho-L-seryl-[protein] + H2O = L-seryl-[protein] + phosphate. The enzyme catalyses O-phospho-L-threonyl-[protein] + H2O = L-threonyl-[protein] + phosphate. Functionally, acts as a suppressor of the SAPK signaling pathways by associating with and dephosphorylating MAP3K7/TAK1 and MAP3K5, and by attenuating the association between MAP3K7/TAK1 and MAP2K4 or MAP2K6. The protein is Protein phosphatase 1L (Ppm1l) of Mus musculus (Mouse).